Reading from the N-terminus, the 341-residue chain is N-acetyl-gamma-glutamyl-phosphate reductase (341 aa).

The active site involves C163.

It belongs to the NAGSA dehydrogenase family. Type 1 subfamily.

It is found in the cytoplasm. It catalyses the reaction N-acetyl-L-glutamate 5-semialdehyde + phosphate + NADP(+) = N-acetyl-L-glutamyl 5-phosphate + NADPH + H(+). Its pathway is amino-acid biosynthesis; L-arginine biosynthesis; N(2)-acetyl-L-ornithine from L-glutamate: step 3/4. In terms of biological role, catalyzes the NADPH-dependent reduction of N-acetyl-5-glutamyl phosphate to yield N-acetyl-L-glutamate 5-semialdehyde. In Idiomarina loihiensis (strain ATCC BAA-735 / DSM 15497 / L2-TR), this protein is N-acetyl-gamma-glutamyl-phosphate reductase.